Consider the following 134-residue polypeptide: Small ribosomal subunit protein uS11 (134 aa).

2 disordered regions span residues 1–24 (MPPKSRAGAVKKVRRKEKKNVAHG) and 115–134 (IQDVTPQPHNGCRPPKRRRV). A compositionally biased stretch (basic residues) spans 9–18 (AVKKVRRKEK).

Belongs to the universal ribosomal protein uS11 family. Part of the 30S ribosomal subunit. Interacts with proteins S7 and S18. Binds to IF-3.

Its function is as follows. Located on the platform of the 30S subunit, it bridges several disparate RNA helices of the 16S rRNA. Forms part of the Shine-Dalgarno cleft in the 70S ribosome. The sequence is that of Small ribosomal subunit protein uS11 from Saccharopolyspora erythraea (strain ATCC 11635 / DSM 40517 / JCM 4748 / NBRC 13426 / NCIMB 8594 / NRRL 2338).